A 179-amino-acid chain; its full sequence is MTLASAEKEMVGVLTFFQKETRGFRTGKAHPALVETVTVEVYGTTMRLSDIASISVSDMRQLLLSPYDAGTVSAISKGILAANLNLQPIVEGATVRINVPEPTEEYRREVIKQLKRKSEEAKVAIRNIRRTFNDRLKKDDNLTEDAVKSLEKKIQELTDKFCKQIEELAKQKEAELATV.

The protein belongs to the RRF family.

It localises to the cytoplasm. Functionally, responsible for the release of ribosomes from messenger RNA at the termination of protein biosynthesis. May increase the efficiency of translation by recycling ribosomes from one round of translation to another. This chain is Ribosome-recycling factor, found in Chlamydia trachomatis serovar D (strain ATCC VR-885 / DSM 19411 / UW-3/Cx).